The primary structure comprises 229 residues: Urease accessory protein UreG (229 aa).

24-31 serves as a coordination point for GTP; sequence GPVGSGKT.

It belongs to the SIMIBI class G3E GTPase family. UreG subfamily. Homodimer. UreD, UreF and UreG form a complex that acts as a GTP-hydrolysis-dependent molecular chaperone, activating the urease apoprotein by helping to assemble the nickel containing metallocenter of UreC. The UreE protein probably delivers the nickel.

Its subcellular location is the cytoplasm. Facilitates the functional incorporation of the urease nickel metallocenter. This process requires GTP hydrolysis, probably effectuated by UreG. This is Urease accessory protein UreG from Albidiferax ferrireducens (strain ATCC BAA-621 / DSM 15236 / T118) (Rhodoferax ferrireducens).